A 272-amino-acid polypeptide reads, in one-letter code: Imidazole glycerol phosphate synthase subunit HisF (272 aa).

Catalysis depends on residues aspartate 11 and aspartate 130.

Belongs to the HisA/HisF family. Heterodimer of HisH and HisF.

Its subcellular location is the cytoplasm. The catalysed reaction is 5-[(5-phospho-1-deoxy-D-ribulos-1-ylimino)methylamino]-1-(5-phospho-beta-D-ribosyl)imidazole-4-carboxamide + L-glutamine = D-erythro-1-(imidazol-4-yl)glycerol 3-phosphate + 5-amino-1-(5-phospho-beta-D-ribosyl)imidazole-4-carboxamide + L-glutamate + H(+). Its pathway is amino-acid biosynthesis; L-histidine biosynthesis; L-histidine from 5-phospho-alpha-D-ribose 1-diphosphate: step 5/9. Its function is as follows. IGPS catalyzes the conversion of PRFAR and glutamine to IGP, AICAR and glutamate. The HisF subunit catalyzes the cyclization activity that produces IGP and AICAR from PRFAR using the ammonia provided by the HisH subunit. This chain is Imidazole glycerol phosphate synthase subunit HisF, found in Methanococcus maripaludis (strain C5 / ATCC BAA-1333).